The following is a 305-amino-acid chain: tRNA pseudouridine synthase B (305 aa).

Asp-39 acts as the Nucleophile in catalysis.

The protein belongs to the pseudouridine synthase TruB family. Type 1 subfamily.

It catalyses the reaction uridine(55) in tRNA = pseudouridine(55) in tRNA. In terms of biological role, responsible for synthesis of pseudouridine from uracil-55 in the psi GC loop of transfer RNAs. This Staphylococcus epidermidis (strain ATCC 35984 / DSM 28319 / BCRC 17069 / CCUG 31568 / BM 3577 / RP62A) protein is tRNA pseudouridine synthase B.